Here is a 668-residue protein sequence, read N- to C-terminus: RING finger protein 214 (668 aa).

Disordered stretches follow at residues 1 to 87 (MAAS…AHEE) and 103 to 125 (NGSQ…TSLR). Ala2 carries the post-translational modification N-acetylalanine. Phosphoserine is present on residues Ser15, Ser40, Ser48, and Ser54. Over residues 43 to 59 (KQKNLSPPSVSSQMITK) the composition is skewed to polar residues. The segment covering 60–71 (ESNRNAHLEHPE) has biased composition (basic and acidic residues). Ser196 is modified (phosphoserine). Residues 220–379 (QDIEKNLDKM…AEKEAELHLT (160 aa)) are a coiled coil. A disordered region spans residues 486–552 (FPILNPALSQ…SSETPRPQPV (67 aa)). Phosphoserine occurs at positions 497, 511, and 516. The span at 523–536 (PHMPPAASIPPPPG) shows a compositional bias: pro residues. The RING-type; atypical zinc-finger motif lies at 623 to 665 (CLMCQKLVQPSELHPMACTHALHKECIKFWAQTNTNDTCPFCP).

This Mus musculus (Mouse) protein is RING finger protein 214 (Rnf214).